The chain runs to 273 residues: MGQKVTGGIKTVDMRDPTYRPLKQELQGLDYCKPTRLDLLLDMPPVSYDVQLLHSWNNNDRSLNVFVKEDDKLIFHRHPVAQSTDAIRGKVGYTRGLHVWQITWAMRQRGTHAVVGVATADAPLHSVGYTTLVGNNHESWGWDLGRNRLYHDGKNQPSKTYPAFLEPDETFIVPDSFLVALDMDDGTLSFIVDGQYMGVAFRGLKGKKLYPVVSAVWGHCEIRMRYLNGLDPEPLPLMDLCRRSVRLALGKERLGAIPALPLPASLKAYLLYQ.

A Phosphotyrosine modification is found at Y31. In terms of domain architecture, B30.2/SPRY spans 33–231 (KPTRLDLLLD…IRMRYLNGLD (199 aa)). One can recognise an SOCS box domain in the interval 232–273 (PEPLPLMDLCRRSVRLALGKERLGAIPALPLPASLKAYLLYQ).

It belongs to the SPSB family. As to quaternary structure, component of the probable ECS(SPSB1) E3 ubiquitin-protein ligase complex which contains CUL5, RNF7/RBX2, Elongin BC complex and SPSB1. Interacts with CUL5, RNF7, ELOB and ELOC. Directly interacts with MET tyrosine kinase domain in the presence and in the absence of HGF, however HGF treatment has a positive effect on this interaction. When phosphorylated, interacts with RASA1 without affecting its stability. Interacts (via B30.2/SPRY domain) with PAWR; this interaction is direct and occurs in association with the Elongin BC complex. Interacts with EPHB2. Interacts with NOS2.

It localises to the cytoplasm. It is found in the cytosol. It functions in the pathway protein modification; protein ubiquitination. Its function is as follows. Substrate recognition component of a SCF-like ECS (Elongin BC-CUL2/5-SOCS-box protein) E3 ubiquitin-protein ligase complex which mediates the ubiquitination and subsequent proteasomal degradation of target proteins. Negatively regulates nitric oxide (NO) production and limits cellular toxicity in activated macrophages by mediating the ubiquitination and proteasomal degradation of NOS2. Acts as a bridge which links the NOS2 with the ECS E3 ubiquitin ligase complex components ELOC and CUL5. This chain is SPRY domain-containing SOCS box protein 1 (Spsb1), found in Mus musculus (Mouse).